The following is a 125-amino-acid chain: Mini-ribonuclease 3 (125 aa).

Aspartate 11 is an active-site residue.

Belongs to the MrnC RNase family. Homodimer. Mg(2+) is required as a cofactor.

The protein resides in the cytoplasm. In terms of biological role, involved in correct processing of both the 5' and 3' ends of 23S rRNA precursor. Processes 30S rRNA precursor transcript even in absence of ribonuclease 3 (Rnc); Rnc processes 30S rRNA into smaller rRNA precursors. This Acholeplasma laidlawii (strain PG-8A) protein is Mini-ribonuclease 3.